Reading from the N-terminus, the 340-residue chain is Adenosine deaminase (340 aa).

The Zn(2+) site is built by H15 and H17. Substrate is bound by residues H17, D19, and G172. Zn(2+) is bound at residue H199. Residue E202 is the Proton donor of the active site. Residue D279 coordinates Zn(2+).

This sequence belongs to the metallo-dependent hydrolases superfamily. Adenosine and AMP deaminases family. Adenosine deaminase subfamily. Zn(2+) serves as cofactor.

The enzyme catalyses adenosine + H2O + H(+) = inosine + NH4(+). It carries out the reaction 2'-deoxyadenosine + H2O + H(+) = 2'-deoxyinosine + NH4(+). Catalyzes the hydrolytic deamination of adenosine and 2-deoxyadenosine. The polypeptide is Adenosine deaminase (Streptococcus agalactiae serotype Ia (strain ATCC 27591 / A909 / CDC SS700)).